Reading from the N-terminus, the 209-residue chain is Protein GrpE (209 aa).

Residues 1–13 (MSNDSSKAKQNQV) are compositionally biased toward polar residues. The segment at 1 to 27 (MSNDSSKAKQNQVDEAVEGEIITDNEN) is disordered. Acidic residues predominate over residues 15 to 27 (EAVEGEIITDNEN).

This sequence belongs to the GrpE family. Homodimer.

The protein resides in the cytoplasm. Its function is as follows. Participates actively in the response to hyperosmotic and heat shock by preventing the aggregation of stress-denatured proteins, in association with DnaK and GrpE. It is the nucleotide exchange factor for DnaK and may function as a thermosensor. Unfolded proteins bind initially to DnaJ; upon interaction with the DnaJ-bound protein, DnaK hydrolyzes its bound ATP, resulting in the formation of a stable complex. GrpE releases ADP from DnaK; ATP binding to DnaK triggers the release of the substrate protein, thus completing the reaction cycle. Several rounds of ATP-dependent interactions between DnaJ, DnaK and GrpE are required for fully efficient folding. The chain is Protein GrpE from Shewanella sediminis (strain HAW-EB3).